Consider the following 785-residue polypeptide: Altered inheritance of mitochondria protein 3-2 (785 aa).

Disordered stretches follow at residues 33 to 122 (TGYQ…QPYM), 142 to 406 (QQVA…SENL), and 418 to 785 (NVDV…RLHK). Residues 91–102 (GSSGNSANGSSA) are compositionally biased toward low complexity. 2 stretches are compositionally biased toward polar residues: residues 103-122 (TIPT…QPYM) and 143-199 (QVAT…QLNI). Positions 249–260 (KPYDWEEQKTTK) are enriched in basic and acidic residues. Composition is skewed to polar residues over residues 283-310 (SRQG…TTTG), 350-366 (ATNN…QNTK), 375-388 (TNKS…SNVM), 395-405 (QMNTKANSSEN), and 455-465 (SSISRDNYNSI). Basic and acidic residues predominate over residues 478-497 (NTGEREGAQELKADIAERSQ). Residues 527–556 (AQTSSDIPQKSSLVTDESNISVPNKSQQPM) show a composition bias toward polar residues. Basic and acidic residues-rich tracts occupy residues 587–613 (KSLE…EQLK) and 624–637 (KNMK…DNKN). A compositionally biased stretch (polar residues) spans 659 to 671 (SLTSEGNHMNLNT). Basic and acidic residues-rich tracts occupy residues 672 to 686 (EKGK…DESK) and 700 to 710 (FKREELSKEVV).

This sequence belongs to the AIM3 family.

Its subcellular location is the membrane raft. The chain is Altered inheritance of mitochondria protein 3-2 (AIM3-2) from Candida glabrata (strain ATCC 2001 / BCRC 20586 / JCM 3761 / NBRC 0622 / NRRL Y-65 / CBS 138) (Yeast).